The sequence spans 495 residues: Internal alternative NAD(P)H-ubiquinone oxidoreductase A1, mitochondrial (495 aa).

The transit peptide at 1–41 (MPWFKNLIKISKTITNQSSSYKSITPLASPLLAQFLQFTKQ) directs the protein to the mitochondrion. Residue 61–91 (RIVVLGSGWAGCRLMKDIDTNIYDVVCVSPR) participates in FAD binding. Position 228-264 (228-264 (LHCVVVGGGPTGVEFSGELSDFILKDVHQRYAHVKDY)) interacts with NAD(+). Residues 486 to 495 (LVFGRDISRI) carry the Microbody targeting signal motif.

The protein belongs to the NADH dehydrogenase family. The cofactor is FAD.

The protein localises to the mitochondrion inner membrane. It localises to the peroxisome. The catalysed reaction is a quinone + NADH + H(+) = a quinol + NAD(+). It carries out the reaction a ubiquinone + NADH + H(+) = a ubiquinol + NAD(+). Its function is as follows. Alternative NADH-ubiquinone oxidoreductase which catalyzes the oxidation of mitochondrial NADH does not translocate protons across the inner mitochondrial membrane. This chain is Internal alternative NAD(P)H-ubiquinone oxidoreductase A1, mitochondrial (NDA1), found in Solanum tuberosum (Potato).